The chain runs to 544 residues: Methionine--tRNA ligase 2 (544 aa).

Residues 10–20 (PYANGSLHLGH) carry the 'HIGH' region motif. Zn(2+)-binding residues include Cys-141, Cys-144, Cys-153, and Cys-156. A 'KMSKS' region motif is present at residues 329-333 (KLSTS). Thr-332 is an ATP binding site.

The protein belongs to the class-I aminoacyl-tRNA synthetase family. MetG type 1 subfamily. In terms of assembly, monomer. The cofactor is Zn(2+).

The protein localises to the cytoplasm. The catalysed reaction is tRNA(Met) + L-methionine + ATP = L-methionyl-tRNA(Met) + AMP + diphosphate. In terms of biological role, is required not only for elongation of protein synthesis but also for the initiation of all mRNA translation through initiator tRNA(fMet) aminoacylation. The chain is Methionine--tRNA ligase 2 from Bacillus anthracis.